We begin with the raw amino-acid sequence, 123 residues long: Small ribosomal subunit protein uS13c (123 aa).

The tract at residues 90–123 (GKRHRNSLPVRGQRTRTNARSRRGAKKTVTGKKK) is disordered. Residues 102–123 (QRTRTNARSRRGAKKTVTGKKK) show a composition bias toward basic residues.

It belongs to the universal ribosomal protein uS13 family. Part of the 30S ribosomal subunit.

It is found in the plastid. The protein resides in the chloroplast. Functionally, located at the top of the head of the 30S subunit, it contacts several helices of the 16S rRNA. This chain is Small ribosomal subunit protein uS13c, found in Thalassiosira pseudonana (Marine diatom).